A 590-amino-acid chain; its full sequence is MLWSNGGGGPREPSSAPSPDHHRAMHSVPPIVASEMQQLIDEMRLQDFDSIRFATYRAACKLRFIQQKTKVHLVDIWNMIEAFRENGLNALPLHTVIKTSRAELLLTTVFHNLNKRLVASQHVDTDVSISLLLAFLLGAYDKQNTGRLTVFSIKVALATLCAGKLVDKLRYIFSQIADSNGLMDHIKFTDFLQQILSLTTAVFEAPTFGFSENAVNQCFHKDEKVSLNVFLDTFLSDPCPPCIMWLPLLHRMASVSNVYHPVVCDACQVRSFTGFRYKCQRCANYQLCQSCFWRGRTSQNHSNEHEMKEYSSYKSPTKQLVHSIHKSLQCIPATSTVGDANIDIFNAKIGGPVSSKPARPLNLNNIVPATPTTIRRQHAATSSADWPTSPVLLPGQASHGGVIDDEHKLIARYAAKLSGRADYPLSNGRSMNSSMVGDERTLIAQLEEENSMMVREMARLESQTTSDDGLAGLRDRKMELEEKMFEMQQRRRELMMQLEHLMAQLNTGPQPSGGVSSASLSQLPFTASDQQLTGVNSTVANAFRAGSLPATSLQGDLLHAADQITTNMSDLVRQLDLAQSDENGVTINGF.

A compositionally biased stretch (gly residues) spans 1–10; sequence MLWSNGGGGP. The tract at residues 1–25 is disordered; sequence MLWSNGGGGPREPSSAPSPDHHRAM. Residues 259–315 form a ZZ-type zinc finger; that stretch reads YHPVVCDACQVRSFTGFRYKCQRCANYQLCQSCFWRGRTSQNHSNEHEMKEYSSYKS. Residues Cys264, Cys267, Cys279, Cys282, Cys288, Cys291, His301, and His305 each contribute to the Zn(2+) site. The stretch at 434–508 forms a coiled coil; that stretch reads SMVGDERTLI…EHLMAQLNTG (75 aa). The interval 468-590 is essential for interaction with ctn-1; that stretch reads DGLAGLRDRK…DENGVTINGF (123 aa). The segment at 484–490 is essential for interaction with dys-1; sequence MFEMQQR.

The protein belongs to the dystrophin family. Dystrobrevin subfamily. In terms of assembly, component of the dystrophin glycoprotein complex (DGC). Interacts with dystrophin (dys-1) and syntrophin (stn-1) to form the DGC. Interacts (via C-terminus) with ctn-1 (via N-terminus); the interaction is required for localization of the dystrophin complex and ctn-1 near dense bodies in muscle cells. From late embryogenesis to adulthood, expressed in neurons and muscles; particularly strong in the ventral nerve cord and in muscles of the body wall, head pharyngeal, and vulva; weaker in the intestinal muscle (at protein level).

The protein resides in the cytoplasm. Plays a role in cholinergic transmission and as a functional partner of dystrophin (dys-1), necessary for muscle maintenance. Required for localization of ctn-1 near dense bodies in muscle cells. This chain is Dystrobrevin-1, found in Caenorhabditis elegans.